The chain runs to 309 residues: tRNA-cytidine(32) 2-sulfurtransferase (309 aa).

The PP-loop motif motif lies at 45 to 50; that stretch reads SGGKDS. Positions 120, 123, and 211 each coordinate [4Fe-4S] cluster.

The protein belongs to the TtcA family. Homodimer. Requires Mg(2+) as cofactor. [4Fe-4S] cluster is required as a cofactor.

It is found in the cytoplasm. The catalysed reaction is cytidine(32) in tRNA + S-sulfanyl-L-cysteinyl-[cysteine desulfurase] + AH2 + ATP = 2-thiocytidine(32) in tRNA + L-cysteinyl-[cysteine desulfurase] + A + AMP + diphosphate + H(+). It participates in tRNA modification. Functionally, catalyzes the ATP-dependent 2-thiolation of cytidine in position 32 of tRNA, to form 2-thiocytidine (s(2)C32). The sulfur atoms are provided by the cysteine/cysteine desulfurase (IscS) system. The sequence is that of tRNA-cytidine(32) 2-sulfurtransferase from Psychromonas ingrahamii (strain DSM 17664 / CCUG 51855 / 37).